The following is a 466-amino-acid chain: Cysteine--tRNA ligase (466 aa).

C28 is a Zn(2+) binding site. Residues 30–40 (PTVYNYIHIGN) carry the 'HIGH' region motif. Zn(2+) is bound by residues C208, H233, and E237. The 'KMSKS' region motif lies at 265 to 269 (KMSKS). Residue K268 coordinates ATP.

It belongs to the class-I aminoacyl-tRNA synthetase family. Monomer. It depends on Zn(2+) as a cofactor.

The protein resides in the cytoplasm. The enzyme catalyses tRNA(Cys) + L-cysteine + ATP = L-cysteinyl-tRNA(Cys) + AMP + diphosphate. This chain is Cysteine--tRNA ligase, found in Staphylococcus epidermidis (strain ATCC 35984 / DSM 28319 / BCRC 17069 / CCUG 31568 / BM 3577 / RP62A).